We begin with the raw amino-acid sequence, 103 residues long: Large ribosomal subunit protein uL24 (103 aa).

It belongs to the universal ribosomal protein uL24 family. In terms of assembly, part of the 50S ribosomal subunit.

Its function is as follows. One of two assembly initiator proteins, it binds directly to the 5'-end of the 23S rRNA, where it nucleates assembly of the 50S subunit. Functionally, one of the proteins that surrounds the polypeptide exit tunnel on the outside of the subunit. The sequence is that of Large ribosomal subunit protein uL24 from Ruegeria pomeroyi (strain ATCC 700808 / DSM 15171 / DSS-3) (Silicibacter pomeroyi).